The primary structure comprises 518 residues: 2,3-bisphosphoglycerate-independent phosphoglycerate mutase (518 aa).

Mn(2+) contacts are provided by Asp-14 and Ser-64. Ser-64 functions as the Phosphoserine intermediate in the catalytic mechanism. Substrate contacts are provided by residues His-125, 155–156, Arg-187, Arg-193, 264–267, and Lys-337; these read RD and RPDR. The Mn(2+) site is built by Asp-404, His-408, Asp-445, His-446, and His-467.

Belongs to the BPG-independent phosphoglycerate mutase family. It depends on Mn(2+) as a cofactor.

It carries out the reaction (2R)-2-phosphoglycerate = (2R)-3-phosphoglycerate. It functions in the pathway carbohydrate degradation; glycolysis; pyruvate from D-glyceraldehyde 3-phosphate: step 3/5. Functionally, catalyzes the interconversion of 2-phosphoglycerate and 3-phosphoglycerate. In Methanococcoides burtonii (strain DSM 6242 / NBRC 107633 / OCM 468 / ACE-M), this protein is 2,3-bisphosphoglycerate-independent phosphoglycerate mutase.